We begin with the raw amino-acid sequence, 427 residues long: MSILKSFIEVSEDSHFPIQNLPYGVFKPTLNDQARIGVAIGDFVCDLSVLADLKLFDGKLKDTKVFHQENLNSFMSLGKELWSEARKTIQNLLSSETSTIRDNKEYREKIFHSISSVTMLLPARIGDYTDFYASKEHATNVGIMFRGKENALMPNWVHLPVGYHGRSSSIVVSGTPLKRPWGQTKSDEPDSLPTFNPCRLLDFELEMGALIGGESTKLGEPISIESAKDHIFGLVLLNDWSARDIQKWEYVPLGPFLAKNFGSTISPWVVTMEALQPFATKPPTQDPQPMKYLQEQGNTTFDIELSVSIKSPKMSKPHKVSTSNLKYMYWTLTQQLAHHTVNGCNMNAGDLLGTGTISGPTEDSYGSMLELSWKGSKVVSLGTETNEERKFIQDGDSVILSGLCKGNGYQIGFGNCEGTILPADKRQ.

Asp-130 contacts Ca(2+). Residue Tyr-132 coordinates substrate. The Proton acceptor role is filled by His-137. Substrate is bound at residue Arg-146. Ca(2+) contacts are provided by Glu-204, Glu-206, and Asp-239. Residue Asp-239 participates in Mg(2+) binding. Gln-246 and Tyr-250 together coordinate substrate. Positions 259 and 263 each coordinate Mg(2+). A substrate-binding site is contributed by Thr-356.

The protein belongs to the FAH family. The cofactor is Ca(2+). Requires Mg(2+) as cofactor.

The enzyme catalyses 4-fumarylacetoacetate + H2O = acetoacetate + fumarate + H(+). It functions in the pathway amino-acid degradation; L-phenylalanine degradation; acetoacetate and fumarate from L-phenylalanine: step 6/6. In Dictyostelium discoideum (Social amoeba), this protein is Fumarylacetoacetase (fah).